A 145-amino-acid polypeptide reads, in one-letter code: Large-conductance mechanosensitive channel (145 aa).

2 consecutive transmembrane segments (helical) span residues 14-34 (VIDL…VDSL) and 81-101 (GIFI…FLMV).

Belongs to the MscL family. As to quaternary structure, homopentamer.

Its subcellular location is the cell inner membrane. Its function is as follows. Channel that opens in response to stretch forces in the membrane lipid bilayer. May participate in the regulation of osmotic pressure changes within the cell. This is Large-conductance mechanosensitive channel from Pelobacter propionicus (strain DSM 2379 / NBRC 103807 / OttBd1).